A 307-amino-acid polypeptide reads, in one-letter code: Elongation factor Ts, mitochondrial (307 aa).

The transit peptide at 1-19 (MIFTRLTRFVGHGTGLRLY) directs the protein to the mitochondrion.

Belongs to the EF-Ts family.

The protein localises to the mitochondrion. Functionally, associates with the EF-Tu.GDP complex and induces the exchange of GDP to GTP. It remains bound to the aminoacyl-tRNA.EF-Tu.GTP complex up to the GTP hydrolysis stage on the ribosome. This is Elongation factor Ts, mitochondrial from Aedes aegypti (Yellowfever mosquito).